The following is a 298-amino-acid chain: Putative S-adenosyl-L-methionine-dependent methyltransferase MAV_0778 (298 aa).

Residues Asp-124 and 153 to 154 (DL) each bind S-adenosyl-L-methionine.

Belongs to the UPF0677 family.

In terms of biological role, exhibits S-adenosyl-L-methionine-dependent methyltransferase activity. This chain is Putative S-adenosyl-L-methionine-dependent methyltransferase MAV_0778, found in Mycobacterium avium (strain 104).